We begin with the raw amino-acid sequence, 480 residues long: Glutamate--tRNA ligase (480 aa).

Positions 9 to 19 (PSPTGNLHIGT) match the 'HIGH' region motif. Positions 247–251 (KLSKR) match the 'KMSKS' region motif. Position 250 (Lys-250) interacts with ATP.

The protein belongs to the class-I aminoacyl-tRNA synthetase family. Glutamate--tRNA ligase type 1 subfamily. In terms of assembly, monomer.

Its subcellular location is the cytoplasm. It carries out the reaction tRNA(Glu) + L-glutamate + ATP = L-glutamyl-tRNA(Glu) + AMP + diphosphate. Catalyzes the attachment of glutamate to tRNA(Glu) in a two-step reaction: glutamate is first activated by ATP to form Glu-AMP and then transferred to the acceptor end of tRNA(Glu). This is Glutamate--tRNA ligase from Nostoc sp. (strain PCC 7120 / SAG 25.82 / UTEX 2576).